The sequence spans 976 residues: Vacuolar membrane protease (976 aa).

Over 1–15 (MKLKSVFRSVLKYRK) the chain is Cytoplasmic. A helical transmembrane segment spans residues 16–36 (TNLSLLLLITYSIITLLYIFD). At 37 to 359 (HERYKLNLPK…KFFVISAKTL (323 aa)) the chain is on the vacuolar side. Residues asparagine 96 and asparagine 121 are each glycosylated (N-linked (GlcNAc...) asparagine). Zn(2+) contacts are provided by histidine 156 and aspartate 168. Residue asparagine 189 is glycosylated (N-linked (GlcNAc...) asparagine). Glutamate 200 functions as the Proton acceptor in the catalytic mechanism. Glutamate 201 provides a ligand contact to Zn(2+). 2 N-linked (GlcNAc...) asparagine glycosylation sites follow: asparagine 212 and asparagine 217. Zn(2+)-binding residues include glutamate 226 and histidine 300. Residues 360–380 (FYWNCIFLLVSPVVAIGLYLI) form a helical membrane-spanning segment. Residues 381–392 (SRDRMTWKSHSW) are Cytoplasmic-facing. Residues 393-412 (LSWTRFPLSLAAGIIVQKLF) form a helical membrane-spanning segment. Topologically, residues 413–428 (SNDIIRSNPLTFSRNY) are vacuolar. The chain crosses the membrane as a helical span at residues 429-449 (FWPISAFFTQVIFTSYVLINC). Residues 450–461 (SNFFFPCADMKS) are Cytoplasmic-facing. Residues 462–482 (LSIIELFIILWTILLFTSKLL) traverse the membrane as a helical segment. The Vacuolar segment spans residues 483–496 (YSSDYRYTGLYPLS). Residues 497-517 (IFFLLSTIAAILRLLALALGM) form a helical membrane-spanning segment. Topologically, residues 518 to 627 (RTRKRLGREC…NSLKLEYTDY (110 aa)) are cytoplasmic. Residues 528 to 610 (RDHHSNYSSH…PLLKGSNSME (83 aa)) form a disordered region. Positions 549–558 (NLEQPQDQFT) are enriched in polar residues. Residues 559–570 (SSQDDQASIQDD) are compositionally biased toward low complexity. Basic and acidic residues predominate over residues 582–601 (NVDEDHGMDSSSQQHDERVP). A helical transmembrane segment spans residues 628–648 (AWIIQFLLIVPIPSFILFNSV). Over 649 to 668 (DVIMDALNHTVQEGSKATFD) the chain is Vacuolar. The N-linked (GlcNAc...) asparagine glycan is linked to asparagine 656. A helical transmembrane segment spans residues 669 to 689 (VLRFGMVGSILMALPILPFFY). The Cytoplasmic portion of the chain corresponds to 690 to 692 (KVN). Residues 693–713 (YITISLTALLFLISASKTLLV) form a helical membrane-spanning segment. The Vacuolar segment spans residues 714-976 (HPFTNSNPLK…LVIVKDAIIL (263 aa)). N-linked (GlcNAc...) asparagine glycosylation is found at asparagine 768, asparagine 796, asparagine 811, asparagine 866, and asparagine 937.

The protein belongs to the peptidase M28 family. Zn(2+) serves as cofactor.

It is found in the vacuole membrane. May be involved in vacuolar sorting and osmoregulation. This is Vacuolar membrane protease from Saccharomyces cerevisiae (strain Lalvin EC1118 / Prise de mousse) (Baker's yeast).